Reading from the N-terminus, the 1131-residue chain is PPi-type phosphoenolpyruvate carboxykinase (1131 aa).

It belongs to the PPi-type phosphoenolpyruvate carboxykinase family. As to quaternary structure, monomer and trimer; forms heterotrimers with PEPCK2 and PEPCK3.

The catalysed reaction is oxaloacetate + diphosphate = phosphoenolpyruvate + phosphate + CO2. In terms of biological role, inorganic pyrophosphate (PPi)-dependent phosphoenolpyruvate carboxykinase, which regulates the carbon flow of the central metabolism by fixing CO(2) to phosphoenolpyruvate to produce oxaloacetate. Can also produce pyruvate and diphosphate from phosphoenolpyruvate and phosphate. This chain is PPi-type phosphoenolpyruvate carboxykinase, found in Propionibacterium freudenreichii subsp. freudenreichii.